A 353-amino-acid polypeptide reads, in one-letter code: Photosystem II protein D1 (353 aa).

Residue Thr-2 is modified to N-acetylthreonine. Position 2 is a phosphothreonine (Thr-2). 3 helical membrane passes run 29-46 (YIGWFGVVMIPTLLTATS), 118-133 (HFFLGICCYMGREWEL), and 142-156 (WIAVAYSAPVAAATA). His-118 contributes to the chlorophyll a binding site. Tyr-126 is a pheophytin a binding site. Residues Asp-170 and Glu-189 each coordinate [CaMn4O5] cluster. Residues 197–218 (FHMLGVAGVFGGSLFSAMHGSL) traverse the membrane as a helical segment. His-198 is a chlorophyll a binding site. A quinone contacts are provided by residues His-215 and 264–265 (SF). A Fe cation-binding site is contributed by His-215. His-272 contacts Fe cation. The helical transmembrane segment at 274-288 (FLAAWPVVGIWFTAL) threads the bilayer. [CaMn4O5] cluster is bound by residues His-332, Glu-333, Asp-342, and Ala-344. A propeptide spanning residues 345–353 (SVEAPSVNG) is cleaved from the precursor.

The protein belongs to the reaction center PufL/M/PsbA/D family. As to quaternary structure, PSII is composed of 1 copy each of membrane proteins PsbA, PsbB, PsbC, PsbD, PsbE, PsbF, PsbH, PsbI, PsbJ, PsbK, PsbL, PsbM, PsbT, PsbX, PsbY, PsbZ, Psb30/Ycf12, at least 3 peripheral proteins of the oxygen-evolving complex and a large number of cofactors. It forms dimeric complexes. The D1/D2 heterodimer binds P680, chlorophylls that are the primary electron donor of PSII, and subsequent electron acceptors. It shares a non-heme iron and each subunit binds pheophytin, quinone, additional chlorophylls, carotenoids and lipids. D1 provides most of the ligands for the Mn4-Ca-O5 cluster of the oxygen-evolving complex (OEC). There is also a Cl(-1) ion associated with D1 and D2, which is required for oxygen evolution. The PSII complex binds additional chlorophylls, carotenoids and specific lipids. serves as cofactor. In terms of processing, tyr-161 forms a radical intermediate that is referred to as redox-active TyrZ, YZ or Y-Z. C-terminally processed by CTPA; processing is essential to allow assembly of the oxygen-evolving complex and thus photosynthetic growth.

Its subcellular location is the plastid. The protein resides in the chloroplast thylakoid membrane. It carries out the reaction 2 a plastoquinone + 4 hnu + 2 H2O = 2 a plastoquinol + O2. Its function is as follows. Photosystem II (PSII) is a light-driven water:plastoquinone oxidoreductase that uses light energy to abstract electrons from H(2)O, generating O(2) and a proton gradient subsequently used for ATP formation. It consists of a core antenna complex that captures photons, and an electron transfer chain that converts photonic excitation into a charge separation. The D1/D2 (PsbA/PsbD) reaction center heterodimer binds P680, the primary electron donor of PSII as well as several subsequent electron acceptors. In Chaetosphaeridium globosum (Charophycean green alga), this protein is Photosystem II protein D1.